Reading from the N-terminus, the 593-residue chain is Bifunctional lycopene cyclase/phytoene synthase (593 aa).

The tract at residues 1 to 242 (MAYDYALVHL…IVFGMAVFDQ (242 aa)) is lycopene beta-cyclase. 7 helical membrane passes run 8–28 (VHLK…YPIF), 31–51 (IHFL…LPWD), 77–97 (IEEL…YILL), 117–136 (IARG…LYGV), 147–167 (YLGL…TVAG), 169–189 (FILT…TVYL), and 231–251 (ILIV…FAFP). The tract at residues 249 to 593 (AFPHLFPKVP…KTVLKALFSA (345 aa)) is phytoene synthase.

It in the N-terminal section; belongs to the lycopene beta-cyclase family. This sequence in the C-terminal section; belongs to the phytoene/squalene synthase family.

The protein localises to the membrane. It catalyses the reaction all-trans-lycopene = gamma-carotene. The enzyme catalyses gamma-carotene = all-trans-beta-carotene. The catalysed reaction is 2 (2E,6E,10E)-geranylgeranyl diphosphate = 15-cis-phytoene + 2 diphosphate. Its pathway is carotenoid biosynthesis; beta-carotene biosynthesis. It participates in carotenoid biosynthesis; phytoene biosynthesis; all-trans-phytoene from geranylgeranyl diphosphate: step 1/1. In terms of biological role, bifunctional enzyme that catalyzes the reactions from geranylgeranyl diphosphate to phytoene (phytoene synthase) and lycopene to beta-carotene via the intermediate gamma-carotene (lycopene cyclase). This chain is Bifunctional lycopene cyclase/phytoene synthase, found in Podospora anserina (strain S / ATCC MYA-4624 / DSM 980 / FGSC 10383) (Pleurage anserina).